The primary structure comprises 445 residues: Phosphoglucosamine mutase (445 aa).

Catalysis depends on Ser102, which acts as the Phosphoserine intermediate. Residues Ser102, Asp241, Asp243, and Asp245 each contribute to the Mg(2+) site. Ser102 carries the phosphoserine modification.

This sequence belongs to the phosphohexose mutase family. The cofactor is Mg(2+). Activated by phosphorylation.

It carries out the reaction alpha-D-glucosamine 1-phosphate = D-glucosamine 6-phosphate. In terms of biological role, catalyzes the conversion of glucosamine-6-phosphate to glucosamine-1-phosphate. In Shigella flexneri serotype 5b (strain 8401), this protein is Phosphoglucosamine mutase.